The primary structure comprises 2374 residues: CCR4-NOT transcription complex subunit 1 (2374 aa).

4 short sequence motifs (LXXLL) span residues 153–157 (LPDLL), 181–185 (LHLLL), 223–227 (LAPLL), and 570–574 (LSMLL). Positions 1009-1051 (LAQAQAQSQPPKAPQPGQASTLVTTATTTTTAAKTTTITRPTA) are enriched in low complexity. The tract at residues 1009–1060 (LAQAQAQSQPPKAPQPGQASTLVTTATTTTTAAKTTTITRPTAVGPKKDVPP) is disordered. An interaction with CCR4-NOT complex catalytic subunits region spans residues 1082-1604 (EPPENVQEKI…QPMKQQAWPT (523 aa)). Short sequence motifs (LXXLL) lie at residues 1638-1642 (IRSLL), 1940-1944 (LIALL), and 2094-2098 (LRVLL).

The protein belongs to the CNOT1 family. Component of the CCR4-NOT complex.

Its subcellular location is the cytoplasm. The protein resides in the nucleus. Its function is as follows. Scaffolding component of the CCR4-NOT complex which is one of the major cellular mRNA deadenylases and is linked to various cellular processes including bulk mRNA degradation, miRNA-mediated repression, translational repression during translational initiation and general transcription regulation. Additional complex functions may be a consequence of its influence on mRNA expression. Its scaffolding function implies its interaction with the catalytic complex module and diverse RNA-binding proteins mediating the complex recruitment to selected mRNA 3'UTRs. Acts as a transcriptional repressor. Represses the ligand-dependent transcriptional activation by nuclear receptors. The polypeptide is CCR4-NOT transcription complex subunit 1 (cnot1) (Danio rerio (Zebrafish)).